Reading from the N-terminus, the 219-residue chain is MNQAIDFAQASIDSYKKHGILEDVIHDTSFQPSGILAVEYSSSAPVAMGNTLPTEKARSKPQFQFTFNKQMQKSVPQANAYVPQDDDLFTLVMTDPDAPSKTDHKWSEFCHLVECDLKLLNEATHETSGATEFFASEFNTKGSNTLIEYMGPAPPKGSGPHRYVFLLYKQPKGVDSSKFSKIKDRPNWGYGTPATGVGKWAKENNLQLVASNFFYAETK.

The residue at position 1 (M1) is an N-acetylmethionine.

This sequence belongs to the phosphatidylethanolamine-binding protein family. Monomer.

It localises to the cytoplasm. Its function is as follows. Specific and potent inhibitor of carboxypeptidase Y. The chain is Carboxypeptidase Y inhibitor (TFS1) from Saccharomyces cerevisiae (strain ATCC 204508 / S288c) (Baker's yeast).